We begin with the raw amino-acid sequence, 85 residues long: CRISPR-associated endoribonuclease Cas2 (85 aa).

Asp8 is a binding site for Mg(2+).

It belongs to the CRISPR-associated endoribonuclease Cas2 protein family. Homodimer, forms a heterotetramer with a Cas1 homodimer. Mg(2+) serves as cofactor.

Its function is as follows. CRISPR (clustered regularly interspaced short palindromic repeat), is an adaptive immune system that provides protection against mobile genetic elements (viruses, transposable elements and conjugative plasmids). CRISPR clusters contain sequences complementary to antecedent mobile elements and target invading nucleic acids. CRISPR clusters are transcribed and processed into CRISPR RNA (crRNA). Functions as a ssRNA-specific endoribonuclease. Involved in the integration of spacer DNA into the CRISPR cassette. This is CRISPR-associated endoribonuclease Cas2 from Thermococcus kodakarensis (strain ATCC BAA-918 / JCM 12380 / KOD1) (Pyrococcus kodakaraensis (strain KOD1)).